A 151-amino-acid polypeptide reads, in one-letter code: MSGVAGREATLLAFDYGEKRIGVAVGNSLTRSARPLVVLQNRNREYRFEAVGKLIDEWKPDALVVGLPMHPDGTPHERTQLAKRFGNQLNGRFNLPVTWIDERYSSVEAEAGIRSGTRQAGMLDAEAACIILQQYLDGLSLEGPSDDHEFR.

It belongs to the YqgF nuclease family.

The protein resides in the cytoplasm. In terms of biological role, could be a nuclease involved in processing of the 5'-end of pre-16S rRNA. The protein is Putative pre-16S rRNA nuclease of Paraburkholderia phymatum (strain DSM 17167 / CIP 108236 / LMG 21445 / STM815) (Burkholderia phymatum).